We begin with the raw amino-acid sequence, 604 residues long: ATP-dependent RNA helicase dbp6 (604 aa).

A compositionally biased stretch (basic and acidic residues) spans 1–16; that stretch reads MSVEVDKSSHSKPKIE. 2 disordered regions span residues 1–37 and 51–70; these read MSVE…HVTA and FSQA…NERD. The span at 51–60 shows a compositional bias: low complexity; that stretch reads FSQAAQQALK. The Q motif motif lies at 149-157; it reads GFAVQAAVL. The 213-residue stretch at 167 to 379 folds into the Helicase ATP-binding domain; the sequence is GPMYSYGGDV…SLKLHNPRLV (213 aa). Residue 180–187 coordinates ATP; sequence AATGSGKT. The DEAD box signature appears at 292–295; sequence DEAD. The region spanning 406–573 is the Helicase C-terminal domain; that stretch reads TLQEYHVSVS…RIKIEFSHIS (168 aa).

It belongs to the DEAD box helicase family. DDX51/DBP6 subfamily. Associated with pre-ribosomal particles.

The protein localises to the nucleus. It is found in the nucleolus. The enzyme catalyses ATP + H2O = ADP + phosphate + H(+). Its function is as follows. ATP-binding RNA helicase involved in the biogenesis of 60S ribosomal subunits and is required for the normal formation of 25S and 5.8S rRNAs. In Schizosaccharomyces pombe (strain 972 / ATCC 24843) (Fission yeast), this protein is ATP-dependent RNA helicase dbp6 (dbp6).